A 377-amino-acid chain; its full sequence is Succinyl-diaminopimelate desuccinylase (377 aa).

Zn(2+) is bound at residue His-68. Residue Asp-70 is part of the active site. Asp-101 contributes to the Zn(2+) binding site. Glu-135 serves as the catalytic Proton acceptor. Zn(2+) is bound by residues Glu-136, Glu-164, and His-350.

The protein belongs to the peptidase M20A family. DapE subfamily. As to quaternary structure, homodimer. The cofactor is Zn(2+). Requires Co(2+) as cofactor.

The enzyme catalyses N-succinyl-(2S,6S)-2,6-diaminopimelate + H2O = (2S,6S)-2,6-diaminopimelate + succinate. Its pathway is amino-acid biosynthesis; L-lysine biosynthesis via DAP pathway; LL-2,6-diaminopimelate from (S)-tetrahydrodipicolinate (succinylase route): step 3/3. Its function is as follows. Catalyzes the hydrolysis of N-succinyl-L,L-diaminopimelic acid (SDAP), forming succinate and LL-2,6-diaminopimelate (DAP), an intermediate involved in the bacterial biosynthesis of lysine and meso-diaminopimelic acid, an essential component of bacterial cell walls. The sequence is that of Succinyl-diaminopimelate desuccinylase from Acinetobacter baylyi (strain ATCC 33305 / BD413 / ADP1).